A 255-amino-acid chain; its full sequence is Thiazole synthase (255 aa).

Residue K96 is the Schiff-base intermediate with DXP of the active site. Residues G157, 183-184, and 205-206 contribute to the 1-deoxy-D-xylulose 5-phosphate site; these read AG and NT.

Belongs to the ThiG family. In terms of assembly, homotetramer. Forms heterodimers with either ThiH or ThiS.

Its subcellular location is the cytoplasm. The enzyme catalyses [ThiS sulfur-carrier protein]-C-terminal-Gly-aminoethanethioate + 2-iminoacetate + 1-deoxy-D-xylulose 5-phosphate = [ThiS sulfur-carrier protein]-C-terminal Gly-Gly + 2-[(2R,5Z)-2-carboxy-4-methylthiazol-5(2H)-ylidene]ethyl phosphate + 2 H2O + H(+). It participates in cofactor biosynthesis; thiamine diphosphate biosynthesis. Its function is as follows. Catalyzes the rearrangement of 1-deoxy-D-xylulose 5-phosphate (DXP) to produce the thiazole phosphate moiety of thiamine. Sulfur is provided by the thiocarboxylate moiety of the carrier protein ThiS. In vitro, sulfur can be provided by H(2)S. The polypeptide is Thiazole synthase (Bacillus licheniformis (strain ATCC 14580 / DSM 13 / JCM 2505 / CCUG 7422 / NBRC 12200 / NCIMB 9375 / NCTC 10341 / NRRL NRS-1264 / Gibson 46)).